Consider the following 464-residue polypeptide: 3-isopropylmalate dehydratase large subunit (464 aa).

The [4Fe-4S] cluster site is built by Cys-337, Cys-397, and Cys-400.

This sequence belongs to the aconitase/IPM isomerase family. LeuC type 1 subfamily. Heterodimer of LeuC and LeuD. It depends on [4Fe-4S] cluster as a cofactor.

It catalyses the reaction (2R,3S)-3-isopropylmalate = (2S)-2-isopropylmalate. It functions in the pathway amino-acid biosynthesis; L-leucine biosynthesis; L-leucine from 3-methyl-2-oxobutanoate: step 2/4. Its function is as follows. Catalyzes the isomerization between 2-isopropylmalate and 3-isopropylmalate, via the formation of 2-isopropylmaleate. This is 3-isopropylmalate dehydratase large subunit from Bacillus cereus (strain G9842).